A 296-amino-acid chain; its full sequence is ATP synthase gamma chain (296 aa).

Belongs to the ATPase gamma chain family. F-type ATPases have 2 components, CF(1) - the catalytic core - and CF(0) - the membrane proton channel. CF(1) has five subunits: alpha(3), beta(3), gamma(1), delta(1), epsilon(1). CF(0) has three main subunits: a, b and c.

The protein localises to the cell inner membrane. Functionally, produces ATP from ADP in the presence of a proton gradient across the membrane. The gamma chain is believed to be important in regulating ATPase activity and the flow of protons through the CF(0) complex. The chain is ATP synthase gamma chain from Gluconobacter oxydans (strain 621H) (Gluconobacter suboxydans).